A 431-amino-acid chain; its full sequence is Histidinol dehydrogenase (431 aa).

Tyrosine 124, glutamine 187, and asparagine 210 together coordinate NAD(+). Positions 236, 258, and 261 each coordinate substrate. Zn(2+) contacts are provided by glutamine 258 and histidine 261. Residues glutamate 325 and histidine 326 each act as proton acceptor in the active site. Residues histidine 326, aspartate 359, glutamate 413, and histidine 418 each coordinate substrate. Aspartate 359 lines the Zn(2+) pocket. Zn(2+) is bound at residue histidine 418.

Belongs to the histidinol dehydrogenase family. The cofactor is Zn(2+).

It catalyses the reaction L-histidinol + 2 NAD(+) + H2O = L-histidine + 2 NADH + 3 H(+). It participates in amino-acid biosynthesis; L-histidine biosynthesis; L-histidine from 5-phospho-alpha-D-ribose 1-diphosphate: step 9/9. In terms of biological role, catalyzes the sequential NAD-dependent oxidations of L-histidinol to L-histidinaldehyde and then to L-histidine. This chain is Histidinol dehydrogenase, found in Legionella pneumophila (strain Lens).